We begin with the raw amino-acid sequence, 119 residues long: MQAKAILRHTPTSPRKMRLVAGLVRGKRVDQAKAILHNSTKSASRNVMVTLKSAVANWSQLNPDERLNDNELFVKAIFVDEGPSLKRLLPAPMGRAYRIRKRSNHLTIVVDKVENKVTK.

The protein belongs to the universal ribosomal protein uL22 family. Part of the 50S ribosomal subunit.

Its function is as follows. This protein binds specifically to 23S rRNA; its binding is stimulated by other ribosomal proteins, e.g. L4, L17, and L20. It is important during the early stages of 50S assembly. It makes multiple contacts with different domains of the 23S rRNA in the assembled 50S subunit and ribosome. The globular domain of the protein is located near the polypeptide exit tunnel on the outside of the subunit, while an extended beta-hairpin is found that lines the wall of the exit tunnel in the center of the 70S ribosome. The chain is Large ribosomal subunit protein uL22 from Chlorobaculum tepidum (strain ATCC 49652 / DSM 12025 / NBRC 103806 / TLS) (Chlorobium tepidum).